The chain runs to 177 residues: FMRFamide-like neuropeptides 7 (177 aa).

A signal peptide spans 1 to 19 (MLGSRFLLLALGLLVLVLA). Positions 20-49 (EESAEQQVQEPTELEKSGEQLSEEDLIDEQ) are excised as a propeptide. A disordered region spans residues 25–106 (QQVQEPTELE…RSSMVRFGKR (82 aa)). Phenylalanine amide occurs at positions 62, 75, 89, 103, 117, and 130. Leu143 carries the leucine amide modification. At Phe157 the chain carries Phenylalanine amide. The propeptide occupies 161-177 (SMEFEMQSNEKNIEDSE).

Belongs to the FARP (FMRFamide related peptide) family. In terms of tissue distribution, expressed in the ASI sensory neurons, the ALA interneuron and the AVG interneuron from where secretion occurs. Expression in the ASI neurons is necessary and sufficient to maintain serotonin-induced fat loss.

Its subcellular location is the secreted. FMRFamide-like neuropeptides. Stimulates serotonin-induced fat loss by binding to and activating the npr-22 receptor which leads to induction of the atgl-1 lipase and subsequent fat loss. Together with atfs-1, negatively regulates the expression of the transcription regulator hlh-11, to promote expression of atgl-1, and thus atgl-1-dependent fat oxidation in response to mitochondrial stress. In terms of biological role, TPMQRSSMVRF-amide: Acts as a ligand for the npr-22 receptor in vitro. Its function is as follows. SPMQRSSMVRF-amide: Acts as a ligand for the npr-22 receptor in vitro. Functionally, acts as a ligand for the npr-22 receptor in vitro. The protein is FMRFamide-like neuropeptides 7 of Caenorhabditis elegans.